The chain runs to 214 residues: Nucleoside triphosphate pyrophosphatase (214 aa).

Aspartate 79 acts as the Proton acceptor in catalysis.

It belongs to the Maf family. A divalent metal cation serves as cofactor.

It is found in the cytoplasm. It carries out the reaction a ribonucleoside 5'-triphosphate + H2O = a ribonucleoside 5'-phosphate + diphosphate + H(+). The enzyme catalyses a 2'-deoxyribonucleoside 5'-triphosphate + H2O = a 2'-deoxyribonucleoside 5'-phosphate + diphosphate + H(+). Nucleoside triphosphate pyrophosphatase. May have a dual role in cell division arrest and in preventing the incorporation of modified nucleotides into cellular nucleic acids. The polypeptide is Nucleoside triphosphate pyrophosphatase (Rhodococcus jostii (strain RHA1)).